A 462-amino-acid polypeptide reads, in one-letter code: MSQTLPKIKIPKKPNYNSLALAEGIEFWELFRVIEAKYENCFLLESAGDNQYDSRYSVIGFQPSHLILGEPGILEIDGKKYPVENPYFALRELTDYNSLSISYAGGFVGYLGYQSMQFFEPKLQLKPHPDFPAMIFGLYLDGLIYDKFTGELIYFDNGTNRIHEVNQILEQLKKENSQKPKATVSLVKAGLSKEVHKQMVEEALEEVKAGNTFQCQIGFEEIYQVDGNPLAIYETLREINPSPHMYYVNLELVTILGASPSSLFRLRQGEMESFPLAGTTKRGVDAKEDTLLARKLLTDPKEIAEHNMLIDLHRNDVGRVAKFGTVKVRRRFDVKRFSHVQHISSEVVGILSSKEDMFSGLASSFPRGTLSGAPKIESDSKIIERIEKSPRGPYGGAVGSFGLNGDCTFAIPIRSFFVNGKKGFVRASGGIVFGFIEPEDEYQEIINKMASVRKALDLHKGP.

L-tryptophan-binding positions include Ser46 and 243-245; that span reads PHM. 278 to 279 is a chorismate binding site; it reads GT. Residue Glu305 participates in Mg(2+) binding. Chorismate contacts are provided by residues Tyr394, Arg414, 428 to 430, and Gly430; that span reads SGG. Glu444 contributes to the Mg(2+) binding site.

This sequence belongs to the anthranilate synthase component I family. Heterotetramer consisting of two non-identical subunits: a beta subunit (TrpG) and a large alpha subunit (TrpE). The cofactor is Mg(2+).

It carries out the reaction chorismate + L-glutamine = anthranilate + pyruvate + L-glutamate + H(+). The protein operates within amino-acid biosynthesis; L-tryptophan biosynthesis; L-tryptophan from chorismate: step 1/5. Feedback inhibited by tryptophan. Functionally, part of a heterotetrameric complex that catalyzes the two-step biosynthesis of anthranilate, an intermediate in the biosynthesis of L-tryptophan. In the first step, the glutamine-binding beta subunit (TrpG) of anthranilate synthase (AS) provides the glutamine amidotransferase activity which generates ammonia as a substrate that, along with chorismate, is used in the second step, catalyzed by the large alpha subunit of AS (TrpE) to produce anthranilate. In the absence of TrpG, TrpE can synthesize anthranilate directly from chorismate and high concentrations of ammonia. The sequence is that of Anthranilate synthase component 1 (trpE) from Leptospira biflexa.